The primary structure comprises 316 residues: Pantothenate kinase (316 aa).

95–102 is a binding site for ATP; the sequence is GSVAVGKS.

The protein belongs to the prokaryotic pantothenate kinase family.

Its subcellular location is the cytoplasm. The catalysed reaction is (R)-pantothenate + ATP = (R)-4'-phosphopantothenate + ADP + H(+). Its pathway is cofactor biosynthesis; coenzyme A biosynthesis; CoA from (R)-pantothenate: step 1/5. This Shigella dysenteriae serotype 1 (strain Sd197) protein is Pantothenate kinase.